Here is a 107-residue protein sequence, read N- to C-terminus: MTRNIGLKVKEPKRECEDKNCPFHGELAIRGKLFDGKVTGSKAKQTITLQKDAPVYFNKFKRYARGKSSIHAHVPGCIDVESGDNVLTAECRPISKSVSYVVVEVRS.

It belongs to the universal ribosomal protein uS17 family. Part of the 30S ribosomal subunit.

Its function is as follows. One of the primary rRNA binding proteins, it binds specifically to the 5'-end of 16S ribosomal RNA. This chain is Small ribosomal subunit protein uS17, found in Nitrosopumilus maritimus (strain SCM1).